Reading from the N-terminus, the 242-residue chain is Methylthioribulose-1-phosphate dehydratase (242 aa).

The tract at residues 1–23 (MTDQREEPQGSNDHLVRSSDPEH) is disordered. A substrate-binding site is contributed by cysteine 102. 2 residues coordinate Zn(2+): histidine 119 and histidine 121. The Proton donor/acceptor role is filled by glutamate 148. Histidine 204 contacts Zn(2+).

The protein belongs to the aldolase class II family. MtnB subfamily. Zn(2+) is required as a cofactor.

It is found in the cytoplasm. It carries out the reaction 5-(methylsulfanyl)-D-ribulose 1-phosphate = 5-methylsulfanyl-2,3-dioxopentyl phosphate + H2O. It participates in amino-acid biosynthesis; L-methionine biosynthesis via salvage pathway; L-methionine from S-methyl-5-thio-alpha-D-ribose 1-phosphate: step 2/6. Functionally, catalyzes the dehydration of methylthioribulose-1-phosphate (MTRu-1-P) into 2,3-diketo-5-methylthiopentyl-1-phosphate (DK-MTP-1-P). This Uncinocarpus reesii (strain UAMH 1704) protein is Methylthioribulose-1-phosphate dehydratase.